A 474-amino-acid chain; its full sequence is Alanine/serine racemase (474 aa).

Residues 139 to 140 and Gln-282 contribute to the pyridoxal 5'-phosphate site; that span reads GS. Residue Lys-308 is modified to N6-(pyridoxal phosphate)lysine. Pyridoxal 5'-phosphate is bound at residue Thr-336.

It belongs to the class-III pyridoxal-phosphate-dependent aminotransferase family. Homohexamer. The cofactor is pyridoxal 5'-phosphate.

The enzyme catalyses L-alanine = D-alanine. The catalysed reaction is L-serine = D-serine. With respect to regulation, completely inhibited by hydroxylamine hydrochloride. Catalyzes the interconversion of L-alanine and D-alanine, and L-serine and D-serine. Has weak activity with valine and threonine. This is Alanine/serine racemase from Pyrococcus horikoshii (strain ATCC 700860 / DSM 12428 / JCM 9974 / NBRC 100139 / OT-3).